Reading from the N-terminus, the 117-residue chain is G antigen 12I (117 aa).

A disordered region spans residues 1–117 (MSWRGRSTYY…PEEGEKQSQC (117 aa)). Composition is skewed to acidic residues over residues 32–45 (FSDE…EEGE) and 87–96 (ECEDGPDGQE). Over residues 103-117 (EEVKTPEEGEKQSQC) the composition is skewed to basic and acidic residues.

This sequence belongs to the GAGE family. In terms of assembly, forms tetramers.

The chain is G antigen 12I (GAGE12I) from Homo sapiens (Human).